Here is a 290-residue protein sequence, read N- to C-terminus: MNGKEGPGGFRKRKHDTFPHNQRREGKDASLSSPVMLAFKSFQQELDARHDKYERLVKLSRDITVESKRTIFLLHRITSAPDMEEILTESESKLDGVRQKILQVAQELSGEDMHQFHRAVTTGLQEYVEAVSFQHFIKTRSLISMEEINKQLTFTAEDSGKESKTPPAEGQEKQLVTWRLKLTPVDYLLGVADLTGELMRMCINSVGNGDIDTPFEVSQFLRQVYDGFSFIGNTGPYEVSKKLYTLKQSLAKVENACYALKVRGSEIPKHMLADVFSVKTDMIDQEESIS.

The interval 1-31 is disordered; the sequence is MNGKEGPGGFRKRKHDTFPHNQRREGKDASL. The segment covering 16–28 has biased composition (basic and acidic residues); sequence DTFPHNQRREGKD. The tract at residues 73–208 is interaction with C1D; the sequence is LLHRITSAPD…MRMCINSVGN (136 aa). Positions 129 and 197 each coordinate Mg(2+). K279 is covalently cross-linked (Glycyl lysine isopeptide (Lys-Gly) (interchain with G-Cter in SUMO2)).

Belongs to the translin family. Ring-shaped heterooctamer of six TSN and two TSNAX subunits. Interacts with GOLGA3, TSNAXIP1, SUN1 and AKAP9. Interacts with the homodimeric form of C1D following gamma-radiation. Interacts with TSN and C1D in a mutually exclusive manner. Post-translationally, sumoylated with SUMO1. Detected in heart, brain, lung, liver, kidney and testis.

It localises to the cytoplasm. The protein localises to the perinuclear region. Its subcellular location is the golgi apparatus. It is found in the nucleus. Functionally, acts in combination with TSN as an endonuclease involved in the activation of the RNA-induced silencing complex (RISC). Possible role in spermatogenesis. The protein is Translin-associated protein X (Tsnax) of Mus musculus (Mouse).